The following is a 487-amino-acid chain: Glutamyl-tRNA(Gln) amidotransferase subunit A (487 aa).

Active-site charge relay system residues include K79 and S154. The Acyl-ester intermediate role is filled by S178.

This sequence belongs to the amidase family. GatA subfamily. Heterotrimer of A, B and C subunits.

It carries out the reaction L-glutamyl-tRNA(Gln) + L-glutamine + ATP + H2O = L-glutaminyl-tRNA(Gln) + L-glutamate + ADP + phosphate + H(+). Allows the formation of correctly charged Gln-tRNA(Gln) through the transamidation of misacylated Glu-tRNA(Gln) in organisms which lack glutaminyl-tRNA synthetase. The reaction takes place in the presence of glutamine and ATP through an activated gamma-phospho-Glu-tRNA(Gln). This is Glutamyl-tRNA(Gln) amidotransferase subunit A from Heliobacterium modesticaldum (strain ATCC 51547 / Ice1).